We begin with the raw amino-acid sequence, 91 residues long: Small ribosomal subunit protein uS19 (91 aa).

Residues 72-91 are disordered; that stretch reads GEFSPTRKFGGHGDDKKKKK. Residues 82 to 91 are compositionally biased toward basic and acidic residues; sequence GHGDDKKKKK.

Belongs to the universal ribosomal protein uS19 family.

Its function is as follows. Protein S19 forms a complex with S13 that binds strongly to the 16S ribosomal RNA. The chain is Small ribosomal subunit protein uS19 from Spiroplasma kunkelii.